The following is a 258-amino-acid chain: Imidazole glycerol phosphate synthase subunit HisF (258 aa).

Catalysis depends on residues Asp11 and Asp130.

It belongs to the HisA/HisF family. As to quaternary structure, heterodimer of HisH and HisF.

The protein localises to the cytoplasm. It catalyses the reaction 5-[(5-phospho-1-deoxy-D-ribulos-1-ylimino)methylamino]-1-(5-phospho-beta-D-ribosyl)imidazole-4-carboxamide + L-glutamine = D-erythro-1-(imidazol-4-yl)glycerol 3-phosphate + 5-amino-1-(5-phospho-beta-D-ribosyl)imidazole-4-carboxamide + L-glutamate + H(+). The protein operates within amino-acid biosynthesis; L-histidine biosynthesis; L-histidine from 5-phospho-alpha-D-ribose 1-diphosphate: step 5/9. IGPS catalyzes the conversion of PRFAR and glutamine to IGP, AICAR and glutamate. The HisF subunit catalyzes the cyclization activity that produces IGP and AICAR from PRFAR using the ammonia provided by the HisH subunit. This chain is Imidazole glycerol phosphate synthase subunit HisF, found in Methylorubrum extorquens (strain CM4 / NCIMB 13688) (Methylobacterium extorquens).